Here is a 124-residue protein sequence, read N- to C-terminus: Large ribosomal subunit protein bL12 (124 aa).

This sequence belongs to the bacterial ribosomal protein bL12 family. In terms of assembly, homodimer. Part of the ribosomal stalk of the 50S ribosomal subunit. Forms a multimeric L10(L12)X complex, where L10 forms an elongated spine to which 2 to 4 L12 dimers bind in a sequential fashion. Binds GTP-bound translation factors.

In terms of biological role, forms part of the ribosomal stalk which helps the ribosome interact with GTP-bound translation factors. Is thus essential for accurate translation. The polypeptide is Large ribosomal subunit protein bL12 (Burkholderia thailandensis (strain ATCC 700388 / DSM 13276 / CCUG 48851 / CIP 106301 / E264)).